We begin with the raw amino-acid sequence, 309 residues long: tRNA uridine(34) hydroxylase (309 aa).

The Rhodanese domain maps to 130-224; it reads SDPDTIVIDT…YLEEVPQEES (95 aa). Cys184 acts as the Cysteine persulfide intermediate in catalysis.

The protein belongs to the TrhO family.

The catalysed reaction is uridine(34) in tRNA + AH2 + O2 = 5-hydroxyuridine(34) in tRNA + A + H2O. Its function is as follows. Catalyzes oxygen-dependent 5-hydroxyuridine (ho5U) modification at position 34 in tRNAs. The polypeptide is tRNA uridine(34) hydroxylase (Rhizobium johnstonii (strain DSM 114642 / LMG 32736 / 3841) (Rhizobium leguminosarum bv. viciae)).